Consider the following 201-residue polypeptide: Ras-like GTP-binding protein YPT1 (201 aa).

Residues 15–23 (GDSGVGKSC), 33–40 (YTESYIST), 63–67 (DTAGQ), 121–124 (NKSD), and 151–153 (SAK) each bind GTP. The Effector region signature appears at 37-45 (YISTIGVDF). Residues cysteine 200 and cysteine 201 are each lipidated (S-geranylgeranyl cysteine).

The protein belongs to the small GTPase superfamily. Rab family.

The protein localises to the endoplasmic reticulum membrane. The protein resides in the golgi apparatus membrane. Its subcellular location is the cytoplasm. It is found in the preautophagosomal structure membrane. Its activity is regulated as follows. Rab activation is generally mediated by a guanine exchange factor (GEF), while inactivation through hydrolysis of bound GTP is catalyzed by a GTPase activating protein (GAP). Functionally, the small GTPases Rab are key regulators of intracellular membrane trafficking, from the formation of transport vesicles to their fusion with membranes. Rabs cycle between an inactive GDP-bound form and an active GTP-bound form that is able to recruit to membranes different set of downstream effectors directly responsible for vesicle formation, movement, tethering and fusion. YPT1 regulates the trafficking of secretory vesicles from the endoplasmic reticulum (ER) to the Golgi. Plays a role in the initial events of the autophagic vacuole development which take place at specialized regions of the endoplasmic reticulum. Also involved in the recycling of membrane proteins. The polypeptide is Ras-like GTP-binding protein YPT1 (YPT1) (Phytophthora infestans (Potato late blight agent)).